We begin with the raw amino-acid sequence, 276 residues long: DnaJ homolog subfamily C member 27-B (276 aa).

Residues Gly23–Ser30, Asp71–His75, and Asn137–Asp140 contribute to the GTP site. Positions Asp220–Lys276 constitute a J domain.

It belongs to the small GTPase superfamily. Rab family.

It localises to the nucleus. GTPase possibly involved in regulation of the MEK/ERK pathway. This Xenopus laevis (African clawed frog) protein is DnaJ homolog subfamily C member 27-B (dnajc27-b).